The sequence spans 419 residues: Tyrosine--tRNA ligase 2 (419 aa).

Y34 serves as a coordination point for L-tyrosine. The short motif at P39 to H48 is the 'HIGH' region element. The L-tyrosine site is built by Y168 and Q172. The 'KMSKS' region signature appears at K230–S234. K233 serves as a coordination point for ATP. Residues K352–L418 form the S4 RNA-binding domain.

This sequence belongs to the class-I aminoacyl-tRNA synthetase family. TyrS type 1 subfamily. As to quaternary structure, homodimer.

The protein localises to the cytoplasm. The enzyme catalyses tRNA(Tyr) + L-tyrosine + ATP = L-tyrosyl-tRNA(Tyr) + AMP + diphosphate + H(+). In terms of biological role, catalyzes the attachment of tyrosine to tRNA(Tyr) in a two-step reaction: tyrosine is first activated by ATP to form Tyr-AMP and then transferred to the acceptor end of tRNA(Tyr). This is Tyrosine--tRNA ligase 2 from Bacillus anthracis.